The following is an 887-amino-acid chain: Centrobin (887 aa).

Residues 1 to 34 (MATAAPSPSSPLRPEDLLSDSSEPPGLNQVSSEV) are disordered. At Ser81 the chain carries Phosphoserine. Disordered regions lie at residues 110 to 153 (MLHT…PSSS), 465 to 486 (SLRQ…LSGQ), 566 to 591 (TLLP…EKGE), and 636 to 695 (LGPP…LPPA). The segment covering 113–128 (TSRDTAYRTGSERREE) has biased composition (basic and acidic residues). Polar residues predominate over residues 133–153 (SDSTATLLNTRPLQDLSPSSS). The stretch at 191–557 (RRKHCERHIQ…LQAMLQAHWE (367 aa)) forms a coiled coil. The interval 360–887 (QEHQLKERLQ…SMRSRGGIWR (528 aa)) is required for centrosome localization. Residues 670–680 (TDDHRAERPFP) show a composition bias toward basic and acidic residues. A Phosphoserine modification is found at Ser782. The disordered stretch occupies residues 824–887 (GTDGQGELVP…SMRSRGGIWR (64 aa)). A compositionally biased stretch (basic and acidic residues) spans 832 to 849 (VPRRNTDSRLGETTRKEI).

As to quaternary structure, interacts with LYST.

It localises to the cytoplasm. Its subcellular location is the cytoskeleton. It is found in the microtubule organizing center. The protein resides in the centrosome. The protein localises to the centriole. Required for centriole duplication. Inhibition of centriole duplication leading to defects in cytokinesis. This chain is Centrobin (Cntrob), found in Mus musculus (Mouse).